The primary structure comprises 528 residues: Dihydromonacolin L monooxygenase LovA (528 aa).

The Cytoplasmic segment spans residues 1 to 23 (MTVDALTQPHHLLSLAWNDTQQH). The chain crosses the membrane as a helical; Signal-anchor for type II membrane protein span at residues 24–44 (GSWFAPLVTTSAGLLCLLLYL). Residues 45–528 (CSSGRRSELP…DEDIRLPGSL (484 aa)) are Lumenal-facing. N399 is a glycosylation site (N-linked (GlcNAc...) asparagine). Position 465 (C465) interacts with heme.

It belongs to the cytochrome P450 family. Requires heme as cofactor.

It localises to the membrane. Its subcellular location is the endoplasmic reticulum membrane. The catalysed reaction is dihydromonacolin L carboxylate + reduced [NADPH--hemoprotein reductase] + O2 = monacolin L carboxylate + oxidized [NADPH--hemoprotein reductase] + 2 H2O + H(+). It carries out the reaction monacolin L carboxylate + reduced [NADPH--hemoprotein reductase] + O2 = monacolin J carboxylate + oxidized [NADPH--hemoprotein reductase] + H2O + H(+). It functions in the pathway polyketide biosynthesis; lovastatin biosynthesis. Functionally, dihydromonacolin L monooxygenase; part of the gene cluster that mediates the biosynthesis of lovastatin (also known as mevinolin, mevacor or monacolin K), a hypolipidemic inhibitor of (3S)-hydroxymethylglutaryl-coenzyme A (HMG-CoA) reductase (HMGR). The first step in the biosynthesis of lovastatin is the production of dihydromonacolin L acid by the lovastatin nonaketide synthase lovB and the trans-acting enoyl reductase lovC via condensation of one acetyl-CoA unit and 8 malonyl-CoA units. Dihydromonacolin L acid is released from lovB by the thioesterase lovG. Next, dihydromonacolin L acid is oxidized by the dihydromonacolin L monooxygenase lovA twice to form monacolin J acid. The 2-methylbutyrate moiety of lovastatin is synthesized by the lovastatin diketide synthase lovF via condensation of one acetyl-CoA unit and one malonyl-CoA unit. Finally, the covalent attachment of this moiety to monacolin J acid is catalyzed by the transesterase lovD to yield lovastatin. LovD has broad substrate specificity and can also convert monacolin J to simvastatin using alpha-dimethylbutanoyl-S-methyl-3-mercaptopropionate (DMB-S-MMP) as the thioester acyl donor, and can also catalyze the reverse reaction and function as hydrolase in vitro. LovD has much higher activity with LovF-bound 2-methylbutanoate than with free diketide substrates. This is Dihydromonacolin L monooxygenase LovA from Aspergillus terreus (strain NIH 2624 / FGSC A1156).